Reading from the N-terminus, the 325-residue chain is Delta(1)-pyrroline-2-carboxylate reductase (325 aa).

The protein belongs to the ornithine cyclodeaminase/mu-crystallin family.

The enzyme catalyses L-proline + NAD(+) = 1-pyrroline-2-carboxylate + NADH + H(+). The catalysed reaction is L-proline + NADP(+) = 1-pyrroline-2-carboxylate + NADPH + H(+). Its function is as follows. Catalyzes the reduction of Delta(1)-pyrroline-2-carboxylate (Pyr2C) to L-proline, using preferentially NADPH over NADH as the electron donor. Is likely involved in a degradation pathway that converts trans-3-hydroxy-L-proline (t3LHyp) to L-proline. This is Delta(1)-pyrroline-2-carboxylate reductase from Bacillus cereus (strain ATCC 10987 / NRS 248).